The sequence spans 648 residues: Nucleoside triphosphatase I (648 aa).

Positions 48-212 constitute a Helicase ATP-binding domain; that stretch reads FIGLKNLNSM…NNLIGLLRPN (165 aa). 61–68 is an ATP binding site; it reads WDTGMGKT. Positions 150–153 match the DEXH box motif; that stretch reads DEVH. The Helicase C-terminal domain maps to 378-541; it reads YIETCKIILN…KINVIFDLLK (164 aa). A binding to the cap-specific mRNA (nucleoside-2'-O-)-methyltransferase region spans residues 467–533; that stretch reads DIIILDMPWN…DIIKDKQGKI (67 aa).

Belongs to the helicase family. NPH I subfamily. In terms of assembly, monomer. Interacts (via C-terminus) with RAP94 (via N-terminus). Interacts with the cap-specific mRNA (nucleoside-2'-O-)-methyltransferase.

It localises to the virion. It catalyses the reaction a ribonucleoside 5'-triphosphate + H2O = a ribonucleoside 5'-diphosphate + phosphate + H(+). DNA-dependent ATPase required for providing the needed energy to achieve the termination of early transcripts. Acts in concert with the RAP94 subunit of the virion RNA polymerase and the capping enzyme/VTF to catalyze release of UUUUUNU-containing nascent RNA from the elongation complex. NPH-I must bind ssDNA in order to exhibit ATPase activity. The protein is Nucleoside triphosphatase I (NPH1) of Amsacta (AmEPV).